Reading from the N-terminus, the 276-residue chain is MNFKNHHQKKRFGQHWLVNNLILEKIKEVAELDEKDFILEIGPGKGALTSKLLDSKISRLHAVELDKDLIDLLNNKFRNDKKFSLQQGDILSTNLDSINKKITKVIANIPYNITGPILDIFIGRLGIVSKNNYKKIIFLMQKDVVDRILSKESSKNAGAMSVRMQLISNIKRICDVPPSSFNPPPKVFSSLVVFEPLRPEKRLDIKLERYIDKLLQISFNSRRKMIRNTLNSILSEDEIKKLAELSEICFNSRPQDISINKWIKLAEGCIKITNKN.

Residues His15, Leu17, Gly42, Glu64, Asp89, and Asn108 each contribute to the S-adenosyl-L-methionine site.

Belongs to the class I-like SAM-binding methyltransferase superfamily. rRNA adenine N(6)-methyltransferase family. RsmA subfamily.

The protein resides in the cytoplasm. It catalyses the reaction adenosine(1518)/adenosine(1519) in 16S rRNA + 4 S-adenosyl-L-methionine = N(6)-dimethyladenosine(1518)/N(6)-dimethyladenosine(1519) in 16S rRNA + 4 S-adenosyl-L-homocysteine + 4 H(+). Its function is as follows. Specifically dimethylates two adjacent adenosines (A1518 and A1519) in the loop of a conserved hairpin near the 3'-end of 16S rRNA in the 30S particle. May play a critical role in biogenesis of 30S subunits. This Prochlorococcus marinus (strain MIT 9515) protein is Ribosomal RNA small subunit methyltransferase A.